Reading from the N-terminus, the 1544-residue chain is Lysine-specific demethylase 5B (1544 aa).

One can recognise a JmjN domain in the interval 32-73 (CPVFEPSWEEFADPFAFIHKIRPIAEQTGICKVRPPPDWQPP). An ARID domain is found at 97-187 (TRVKLNFLDQ…ILNPYNLFLS (91 aa)). Residues K148, K204, K209, K242, K274, and K278 each participate in a glycyl lysine isopeptide (Lys-Gly) (interchain with G-Cter in SUMO2) cross-link. Residues 201-230 (TDTKDKEYKPHDIPQRQSVQPSETCPPARR) form a disordered region. The span at 202–214 (DTKDKEYKPHDIP) shows a compositional bias: basic and acidic residues. The segment at 309–359 (LYVCLLCGSGNDEDRLLLCDGCDDSYHTFCLIPPLHDVPKGDWRCPKCLAQ) adopts a PHD-type 1 zinc-finger fold. A 2-oxoglutarate-binding site is contributed by Y425. The JmjC domain occupies 453 to 619 (EYLDSGWNLN…LGRQCVEHYR (167 aa)). Residues H499 and E501 each coordinate Fe cation. Residues S507, N509, and K517 each contribute to the 2-oxoglutarate site. Residue H587 coordinates Fe cation. The C5HC2 zinc-finger motif lies at 692-744 (CVKCKTTCFMSAISCSCKPGLLVCLHHVKELCSCPPYKYKLRYRYTLDDLYPM). K769 is covalently cross-linked (Glycyl lysine isopeptide (Lys-Gly) (interchain with G-Cter in SUMO2)). K832 carries the N6-acetyllysine modification. S986 is modified (phosphoserine). A PHD-type 2 zinc finger spans residues 1176 to 1224 (IKICLCQKAPAAPMIQCELCRDAFHTSCVAVPSISQGLRIWLCPHCRRS). A Phosphoserine modification is found at S1328. The segment at 1374-1400 (PSPAQQTDRSSPVRPSSEKNDCCRGKR) is disordered. Residues 1376–1387 (PAQQTDRSSPVR) are compositionally biased toward polar residues. Residues 1389–1400 (SSEKNDCCRGKR) are compositionally biased toward basic and acidic residues. K1450 participates in a covalent cross-link: Glycyl lysine isopeptide (Lys-Gly) (interchain with G-Cter in SUMO2). Phosphoserine is present on S1456. The PHD-type 3 zinc-finger motif lies at 1484–1538 (DAICPAVSCLQPEGDEVDWVQCDGSCNQWFHQVCVGVSPEMAEKEDYICVRCTVK).

This sequence belongs to the JARID1 histone demethylase family. Interacts with FOXG1B, PAX9, MYC, MYCN and RB1. Interacts with HDAC1, HDAC4, HDAC5 and HDAC7. Interacts (via PHD-type 1 zinc finger) with histone H3 unmodified at 'Lys-4'; the interaction is inhibited when histone H3 is methylated at 'Arg-2' or 'Lys-4'. The cofactor is Fe(2+). In terms of tissue distribution, ubiquitously expressed, with highest levels in testis. Down-regulated in melanoma and glioblastoma. Up-regulated in breast cancer (at protein level).

It localises to the nucleus. The enzyme catalyses N(6),N(6),N(6)-trimethyl-L-lysyl(4)-[histone H3] + 3 2-oxoglutarate + 3 O2 = L-lysyl(4)-[histone H3] + 3 formaldehyde + 3 succinate + 3 CO2. With respect to regulation, several specific inhibitors are being developed and tested. The inhibitor KDOAM-25 inhibits its demethylase activity, resulting to cell cycle arrest in myeloma cells. Functionally, histone demethylase that demethylates 'Lys-4' of histone H3, thereby playing a central role in histone code. Does not demethylate histone H3 'Lys-9' or H3 'Lys-27'. Demethylates trimethylated, dimethylated and monomethylated H3 'Lys-4'. Acts as a transcriptional corepressor for FOXG1B and PAX9. Favors the proliferation of breast cancer cells by repressing tumor suppressor genes such as BRCA1 and HOXA5. In contrast, may act as a tumor suppressor for melanoma. Represses the CLOCK-BMAL1 heterodimer-mediated transcriptional activation of the core clock component PER2. The protein is Lysine-specific demethylase 5B (KDM5B) of Homo sapiens (Human).